A 300-amino-acid polypeptide reads, in one-letter code: GTP-binding protein At2g22870 (300 aa).

The EngB-type G domain occupies 119–297 (DRPEIAILGR…LLHMSQLRNY (179 aa)). Residues 127–134 (GRSNVGKS), 154–158 (GKTQL), 172–175 (DLPG), 239–242 (TKCD), and 276–278 (TSS) contribute to the GTP site. Mg(2+)-binding residues include S134 and T156.

This sequence belongs to the TRAFAC class TrmE-Era-EngA-EngB-Septin-like GTPase superfamily. EngB GTPase family. Requires Mg(2+) as cofactor.

This Arabidopsis thaliana (Mouse-ear cress) protein is GTP-binding protein At2g22870 (EMB2001).